Consider the following 478-residue polypeptide: MRFTFTRQFLAFFILISNPASILPRSENLTFPTFEPEPYLYSVGRKKLVDAQYRCYDRMQQLPPYEGEGPYCNRTWDGWMCWDDTPAGVLSVQLCPDYFPDFDPTEKVTKYCDESGVWFKHPENNRTWSNYTLCNAFTPEKLQNAYVLYYLAIVGHSMSIITLVVSLGIFVYFRSLGCQRVTLHKNMFLTYILNSMIIIIHLVEVVPNGELVRKDPVSCKILHFFHQYMMACNYFWMLCEGIYLHTLIVVSVFNEAKHLRWYYLLGWGFPLVPTTIHAITRALYFNDNCWISVDTHLLYIIHGPVMVALVVNFFFLLNIVRVLVTKMRETHEAESYMYLKAVKATMILVPLLGIQFVVFPWRPSNKVLGKIYDYFMHSLIHFQGFFVATIYCFCNNEVQTTLKRQWAQFKIQWNQRWGTRPSNRSAAARAAAAAAEAGGDNIPVYICHQEPRNDPPNNQGEEGAEMIVLNIIEKESSA.

Residues 1–22 (MRFTFTRQFLAFFILISNPASI) form the signal peptide. The Extracellular segment spans residues 23–146 (LPRSENLTFP…FTPEKLQNAY (124 aa)). N28, N73, N125, and N130 each carry an N-linked (GlcNAc...) asparagine glycan. 3 cysteine pairs are disulfide-bonded: C55–C81, C72–C112, and C95–C134. Residues 147-169 (VLYYLAIVGHSMSIITLVVSLGI) traverse the membrane as a helical segment. At 170–181 (FVYFRSLGCQRV) the chain is on the cytoplasmic side. Residues 182–202 (TLHKNMFLTYILNSMIIIIHL) form a helical membrane-spanning segment. Residues 203–219 (VEVVPNGELVRKDPVSC) are Extracellular-facing. Residues C219 and C289 are joined by a disulfide bond. Residues 220–242 (KILHFFHQYMMACNYFWMLCEGI) traverse the membrane as a helical segment. Residues 243–259 (YLHTLIVVSVFNEAKHL) are Cytoplasmic-facing. Residues 260–280 (RWYYLLGWGFPLVPTTIHAIT) traverse the membrane as a helical segment. At 281–296 (RALYFNDNCWISVDTH) the chain is on the extracellular side. Residues 297–320 (LLYIIHGPVMVALVVNFFFLLNIV) form a helical membrane-spanning segment. Residues 321 to 340 (RVLVTKMRETHEAESYMYLK) are Cytoplasmic-facing. Residues 341–359 (AVKATMILVPLLGIQFVVF) form a helical membrane-spanning segment. The Extracellular portion of the chain corresponds to 360-367 (PWRPSNKV). Residues 368 to 394 (LGKIYDYFMHSLIHFQGFFVATIYCFC) traverse the membrane as a helical segment. Topologically, residues 395–478 (NNEVQTTLKR…LNIIEKESSA (84 aa)) are cytoplasmic.

It belongs to the G-protein coupled receptor 2 family. As to quaternary structure, heterodimer of CALCR and RAMP1, RAMP2 or RAMP3; the receptor complexes function as AMYR1, AMYR2 and AMYR3 receptors, respectively, and respond to amylin/IAPP, calcitonin/CT and CGRP1 ligands. Interacts with GPRASP2.

It localises to the cell membrane. Its function is as follows. G protein-coupled receptor activated by ligand peptides amylin (IAPP), calcitonin (CT/CALCA) and calcitonin gene-related peptide type 1 (CGRP1/CALCA). CALCR interacts with receptor-activity-modifying proteins RAMP1, 2 and 3 to form receptor complexes AMYR1, 2 and 3, respectively. IAPP, CT and CGRP1 activate CALCR and AMYRs with distinct modes of receptor activation resulting in specific phenotypes. Ligand binding causes a conformation change that triggers signaling via guanine nucleotide-binding proteins (G proteins) and modulates the activity of downstream effectors. Activates cAMP-dependent pathway. The sequence is that of Calcitonin receptor from Cavia porcellus (Guinea pig).